A 514-amino-acid chain; its full sequence is MPDIDTCPICVESPLEDSTTFNNIAWLQCDICNQWFHASCLKIPKIEVNNLHSYHCEGCSKSHGPSIPKRKSKRSKVQIDYVALNDGDVFAVDKSSHPHVDKFLSFEVNANEIDDKINPYIDFRKDITADYALDTRLTRPVLIPRADLDIVDMKLPIEGKEITIDYIANEVGDDTPLDVMDVLTQQGVNPGWNLGKWRDYYNTDELSRDRIRNVISLEISDVDSFGKSFRRPRIVRDMDLVDKVWNDKSPRPKVTKYCLMSVTGSFTDFHIDFSGTSVYYTVCSGSKTFLMYPPTEQNLDIYTSWCLQPDQNYMWFGDFTKAFKGKGCTPSGGFKVTLSPGDLFIIPSGWIHAVFTPEDSLVIGGNFLTLMDLSMHLRIYEIEKVTRVPAKFRFPMFNRVLWLTSWYYYNNKSQFLKDLGQDAHIKNEAHIKSEAHSRGEVHTKTETHAVKDEPQPDQSVQYKTLSCLVSHLQSHYESSKINKVARNTIPAGLIGKDIPGYLAKLQSWLDELSP.

The segment at 4-62 (IDTCPICVESPLEDSTTFNNIAWLQCDICNQWFHASCLKIPKIEVNNLHSYHCEGCSKS) adopts a PHD-type zinc-finger fold. Residues 220 to 384 (SDVDSFGKSF…MHLRIYEIEK (165 aa)) form the JmjC domain. Threonine 267 lines the substrate pocket. Fe cation contacts are provided by histidine 270 and aspartate 272. Lysine 287 contacts substrate. A Fe cation-binding site is contributed by histidine 352. Residues 432–454 (KSEAHSRGEVHTKTETHAVKDEP) are compositionally biased toward basic and acidic residues. The disordered stretch occupies residues 432–456 (KSEAHSRGEVHTKTETHAVKDEPQP).

The protein belongs to the JHDM1 histone demethylase family. Fe(2+) is required as a cofactor.

It is found in the nucleus. It carries out the reaction N(6),N(6)-dimethyl-L-lysyl(36)-[histone H3] + 2 2-oxoglutarate + 2 O2 = L-lysyl(36)-[histone H3] + 2 formaldehyde + 2 succinate + 2 CO2. Its function is as follows. Histone demethylase that specifically demethylates 'Lys-36' of histone H3, thereby playing a central role in histone code. This is JmjC domain-containing histone demethylation protein 1 (JHD1) from Debaryomyces hansenii (strain ATCC 36239 / CBS 767 / BCRC 21394 / JCM 1990 / NBRC 0083 / IGC 2968) (Yeast).